A 1746-amino-acid chain; its full sequence is Non-reducing polyketide synthase ptaA (1746 aa).

The interval 4 to 227 (NSGSGTSPWG…ALPVYGGLCH (224 aa)) is N-terminal acylcarrier protein transacylase domain (SAT). The Ketosynthase family 3 (KS3) domain maps to 361–796 (QSKIAIVGMS…GGNTTIAIEE (436 aa)). Active-site for beta-ketoacyl synthase activity residues include C534, H670, and H714. Residues 898–1218 (FAFTGQGASY…LGALHLAGIP (321 aa)) are malonyl-CoA:ACP transacylase (MAT) domain. The product template (PT) domain stretch occupies residues 1286–1605 (TSTVHRVIGE…RLLLDRFFSA (320 aa)). Residues 1290–1425 (HRVIGETFDG…ATLFYGKAND (136 aa)) are N-terminal hotdog fold. The 311-residue stretch at 1290 to 1600 (HRVIGETFDG…FRRYPRLLLD (311 aa)) folds into the PKS/mFAS DH domain. H1322 (proton acceptor; for dehydratase activity) is an active-site residue. The segment at 1452 to 1600 (VANRFSRNMA…FRRYPRLLLD (149 aa)) is C-terminal hotdog fold. D1511 acts as the Proton donor; for dehydratase activity in catalysis. Residues 1671-1745 (DSITVKAMAL…DLRAWLLEYY (75 aa)) form the Carrier domain. S1705 carries the post-translational modification O-(pantetheine 4'-phosphoryl)serine.

The enzyme catalyses holo-[ACP] + 8 malonyl-CoA + 8 H(+) = atrochrysone carboxyl-[ACP] + 8 CO2 + 8 CoA + 2 H2O. It participates in secondary metabolite biosynthesis. In terms of biological role, non-reducing polyketide synthase; part of the gene cluster that mediates the biosynthesis of pestheic acid, a diphenyl ether which is a biosynthetic precursor of the unique chloropupukeananes. The biosynthesis initiates from condensation of acetate and malonate units catalyzed by the non-reducing PKS ptaA. As the ptaA protein is TE/CLC domain-deficient, hydrolysis and Claisen cyclization of the polyketide could be catalyzed by ptaB containing a beta-lactamase domain. The ptaB protein might hydrolyze the thioester bond between the ACP of ptaA and the intermediate to release atrochrysone carboxylic acid, which is spontaneously dehydrated to form endocrocin anthrone. Endocrocin anthrone is then converted to endocrocin, catalyzed by the anthrone oxygenase ptaC. Spontaneous decarboxylation of endocrocin occurs to generate emodin. An O-methyltransferase (ptaH or ptaI) could methylate emodin to form physcion. PtaJ could then catalyze the oxidative cleavage of physcion, and rotation of the intermediate could then afford desmethylisosulochrin. PtaF, a putative NADH-dependent oxidoreductase, might also participate in the oxidative cleavage step. Desmethylisosulochrin is then transformed by another O-methyltransferase (ptaH or ptaI) to form isosulochrin. Chlorination of isosulochrin by ptaM in the cyclohexadienone B ring then produces chloroisosulochrin. PtaE is responsible for the oxidative coupling reactions of both benzophenones isosulochrin and chloroisosulochrin to RES-1214-1 and pestheic acid respectively, regardless of chlorination. The polypeptide is Non-reducing polyketide synthase ptaA (Pestalotiopsis fici (strain W106-1 / CGMCC3.15140)).